The sequence spans 302 residues: Paired immunoglobulin-like type 2 receptor alpha (302 aa).

A signal peptide spans 1-31 (MALLISLPGGTPAMAQILLLLSSACLHAGNS). Residues 32–198 (ERSNRKNGFG…GGLDLQTTVG (167 aa)) are Extracellular-facing. Asparagine 90 and asparagine 107 each carry an N-linked (GlcNAc...) asparagine glycan. Residues 199-219 (LATAAAVFLVGVLGLIVFLWW) traverse the membrane as a helical segment. At 220 to 302 (KRRRQGQKTK…ETVYSIVKAK (83 aa)) the chain is on the cytoplasmic side. Over residues 228 to 248 (TKAEIPAREPLETSEKHESVG) the composition is skewed to basic and acidic residues. The segment at 228–293 (TKAEIPAREP…LPVHGNPQEE (66 aa)) is disordered. 2 short sequence motifs (ITIM motif) span residues 265–270 (IVYASI) and 294–299 (TVYSIV). A compositionally biased stretch (polar residues) spans 270–280 (ISLSSPTSPGT).

In terms of assembly, interacts with CD99. In terms of processing, phosphorylated on tyrosine residues.

It is found in the membrane. Its function is as follows. Paired receptors consist of highly related activating and inhibitory receptors and are widely involved in the regulation of the immune system. Receptor for CD99 and PIANP. This Mus musculus (Mouse) protein is Paired immunoglobulin-like type 2 receptor alpha (Pilra).